We begin with the raw amino-acid sequence, 387 residues long: 3-ketoacyl-CoA thiolase (387 aa).

Catalysis depends on Cys91, which acts as the Acyl-thioester intermediate. Catalysis depends on proton acceptor residues His343 and Cys373.

This sequence belongs to the thiolase-like superfamily. Thiolase family. Heterotetramer of two alpha chains (FadB) and two beta chains (FadA).

The protein localises to the cytoplasm. The enzyme catalyses an acyl-CoA + acetyl-CoA = a 3-oxoacyl-CoA + CoA. The protein operates within lipid metabolism; fatty acid beta-oxidation. In terms of biological role, catalyzes the final step of fatty acid oxidation in which acetyl-CoA is released and the CoA ester of a fatty acid two carbons shorter is formed. The polypeptide is 3-ketoacyl-CoA thiolase (Escherichia coli O139:H28 (strain E24377A / ETEC)).